A 175-amino-acid chain; its full sequence is Glycine-rich RNA-binding protein 1 (175 aa).

One can recognise an RRM domain in the interval Ala-3–Ser-81. Residues Gly-114–Gln-175 form a disordered region. Positions Pro-122–Tyr-131 are enriched in low complexity. Gly residues predominate over residues Pro-132–Gln-141. Low complexity predominate over residues Gln-142–Pro-162. Positions Gln-163–Gln-175 are enriched in gly residues.

The protein belongs to the glycine-rich RNA-binding protein family. Part of large ribonucleoprotein complexes (mRNPs) containing RNA-binding proteins RRM4 and PAB1, endosome-binding protein UPA1, core scaffold protein UPA2 and associated factor GRP1.

Its subcellular location is the endosome. Component of endosomal mRNA transport that regulates polarity of the infectious hyphae by transporting a broad spectrum of cargo mRNAs from the nucleus to cell poles. The polypeptide is Glycine-rich RNA-binding protein 1 (Mycosarcoma maydis (Corn smut fungus)).